A 328-amino-acid chain; its full sequence is Fructokinase-2 (328 aa).

The protein belongs to the carbohydrate kinase PfkB family.

The enzyme catalyses D-fructose + ATP = D-fructose 6-phosphate + ADP + H(+). It functions in the pathway glycan biosynthesis; starch biosynthesis. May play an important role in maintaining the flux of carbon towards starch formation. This Solanum habrochaites (Wild tomato) protein is Fructokinase-2 (FRK2).